We begin with the raw amino-acid sequence, 159 residues long: NADH-quinone oxidoreductase subunit I (159 aa).

2 consecutive 4Fe-4S ferredoxin-type domains span residues 51–80 and 90–119; these read RRYE…IEAD and TRYD…EGPN. Cys-60, Cys-63, Cys-66, Cys-70, Cys-99, Cys-102, Cys-105, and Cys-109 together coordinate [4Fe-4S] cluster.

The protein belongs to the complex I 23 kDa subunit family. In terms of assembly, NDH-1 is composed of 14 different subunits. Subunits NuoA, H, J, K, L, M, N constitute the membrane sector of the complex. It depends on [4Fe-4S] cluster as a cofactor.

It is found in the cell inner membrane. The catalysed reaction is a quinone + NADH + 5 H(+)(in) = a quinol + NAD(+) + 4 H(+)(out). In terms of biological role, NDH-1 shuttles electrons from NADH, via FMN and iron-sulfur (Fe-S) centers, to quinones in the respiratory chain. The immediate electron acceptor for the enzyme in this species is believed to be ubiquinone. Couples the redox reaction to proton translocation (for every two electrons transferred, four hydrogen ions are translocated across the cytoplasmic membrane), and thus conserves the redox energy in a proton gradient. The protein is NADH-quinone oxidoreductase subunit I of Rickettsia massiliae (strain Mtu5).